A 385-amino-acid polypeptide reads, in one-letter code: Cytochrome b (385 aa).

Transmembrane regions (helical) follow at residues 32–52 (FGSL…TLAM), 76–98 (WFIR…AHMG), 113–133 (PWSI…MGYV), and 179–199 (FFAL…LHLI). Heme b contacts are provided by His-82 and His-96. His-183 and His-197 together coordinate heme b. His-202 lines the a ubiquinone pocket. Transmembrane regions (helical) follow at residues 225–245 (YSFK…LFVF), 289–309 (LGGV…PIVD), 321–341 (ISKL…VLGQ), and 348–368 (FIVL…ILLP).

The protein belongs to the cytochrome b family. In terms of assembly, fungal cytochrome b-c1 complex contains 10 subunits; 3 respiratory subunits, 2 core proteins and 5 low-molecular weight proteins. Cytochrome b-c1 complex is a homodimer. The cofactor is heme b.

It localises to the mitochondrion inner membrane. Its function is as follows. Component of the ubiquinol-cytochrome c reductase complex (complex III or cytochrome b-c1 complex) that is part of the mitochondrial respiratory chain. The b-c1 complex mediates electron transfer from ubiquinol to cytochrome c. Contributes to the generation of a proton gradient across the mitochondrial membrane that is then used for ATP synthesis. This Yarrowia lipolytica (strain CLIB 122 / E 150) (Yeast) protein is Cytochrome b (COB).